Reading from the N-terminus, the 950-residue chain is Glycine dehydrogenase (decarboxylating) 1 (950 aa).

Lysine 704 carries the N6-(pyridoxal phosphate)lysine modification.

The protein belongs to the GcvP family. The glycine cleavage system is composed of four proteins: P, T, L and H. Requires pyridoxal 5'-phosphate as cofactor.

The enzyme catalyses N(6)-[(R)-lipoyl]-L-lysyl-[glycine-cleavage complex H protein] + glycine + H(+) = N(6)-[(R)-S(8)-aminomethyldihydrolipoyl]-L-lysyl-[glycine-cleavage complex H protein] + CO2. In terms of biological role, the glycine cleavage system catalyzes the degradation of glycine. The P protein binds the alpha-amino group of glycine through its pyridoxal phosphate cofactor; CO(2) is released and the remaining methylamine moiety is then transferred to the lipoamide cofactor of the H protein. The polypeptide is Glycine dehydrogenase (decarboxylating) 1 (Pseudomonas fluorescens (strain Pf0-1)).